The following is a 150-amino-acid chain: Small ribosomal subunit protein uS15 (150 aa).

The span at methionine 1–glycine 10 shows a compositional bias: basic residues. Positions methionine 1–threonine 21 are disordered.

Belongs to the universal ribosomal protein uS15 family. Part of the 30S ribosomal subunit.

This chain is Small ribosomal subunit protein uS15, found in Caldivirga maquilingensis (strain ATCC 700844 / DSM 13496 / JCM 10307 / IC-167).